We begin with the raw amino-acid sequence, 584 residues long: Endoribonuclease YBEY, chloroplastic (584 aa).

A chloroplast-targeting transit peptide spans M1–T50. 3 residues coordinate Zn(2+): H240, H244, and H250.

It belongs to the endoribonuclease YbeY family. Zn(2+) is required as a cofactor.

Its subcellular location is the plastid. It is found in the chloroplast stroma. Functionally, endoribonuclease required for chloroplast ribosomal RNA (rRNA) processing and essential for normal growth and development. May be involved in maturation of both the 5' and 3' ends of 16S, 23S, and 4.5S rRNAs. Cleaves chloroplast rRNAs, mRNAs and tRNAs in vitro. In Arabidopsis thaliana (Mouse-ear cress), this protein is Endoribonuclease YBEY, chloroplastic.